A 320-amino-acid chain; its full sequence is Lipoyl synthase (320 aa).

A compositionally biased stretch (basic and acidic residues) spans 1–29 (MIGKLVRDLKIPDQRHPEKAHRPDNDQPR). Residues 1-32 (MIGKLVRDLKIPDQRHPEKAHRPDNDQPRKPS) form a disordered region. The [4Fe-4S] cluster site is built by cysteine 60, cysteine 65, cysteine 71, cysteine 86, cysteine 90, cysteine 93, and serine 300. Residues 71–289 (CWGQGHATMM…EKAAYGKGFL (219 aa)) form the Radical SAM core domain.

This sequence belongs to the radical SAM superfamily. Lipoyl synthase family. Requires [4Fe-4S] cluster as cofactor.

The protein localises to the cytoplasm. The catalysed reaction is [[Fe-S] cluster scaffold protein carrying a second [4Fe-4S](2+) cluster] + N(6)-octanoyl-L-lysyl-[protein] + 2 oxidized [2Fe-2S]-[ferredoxin] + 2 S-adenosyl-L-methionine + 4 H(+) = [[Fe-S] cluster scaffold protein] + N(6)-[(R)-dihydrolipoyl]-L-lysyl-[protein] + 4 Fe(3+) + 2 hydrogen sulfide + 2 5'-deoxyadenosine + 2 L-methionine + 2 reduced [2Fe-2S]-[ferredoxin]. Its pathway is protein modification; protein lipoylation via endogenous pathway; protein N(6)-(lipoyl)lysine from octanoyl-[acyl-carrier-protein]: step 2/2. Catalyzes the radical-mediated insertion of two sulfur atoms into the C-6 and C-8 positions of the octanoyl moiety bound to the lipoyl domains of lipoate-dependent enzymes, thereby converting the octanoylated domains into lipoylated derivatives. The chain is Lipoyl synthase from Cereibacter sphaeroides (strain ATCC 17025 / ATH 2.4.3) (Rhodobacter sphaeroides).